The following is an 852-amino-acid chain: Alanine--tRNA ligase (852 aa).

Residues His554, His558, Cys656, and His660 each contribute to the Zn(2+) site.

Belongs to the class-II aminoacyl-tRNA synthetase family. The cofactor is Zn(2+).

The protein localises to the cytoplasm. It carries out the reaction tRNA(Ala) + L-alanine + ATP = L-alanyl-tRNA(Ala) + AMP + diphosphate. Its function is as follows. Catalyzes the attachment of alanine to tRNA(Ala) in a two-step reaction: alanine is first activated by ATP to form Ala-AMP and then transferred to the acceptor end of tRNA(Ala). Also edits incorrectly charged Ser-tRNA(Ala) and Gly-tRNA(Ala) via its editing domain. The polypeptide is Alanine--tRNA ligase (Campylobacter curvus (strain 525.92)).